The sequence spans 120 residues: MSLTNEQIIEAIASKSVSEIVELITAMEEKFGVSAAAAVAAAPAAAAAEEKTEFDVVLANAGANKVAVIKAVRGATGLGLKEAKDLVESAPATLKEGISKPEAEALKKELEDAGAQVEIK.

Belongs to the bacterial ribosomal protein bL12 family. In terms of assembly, homodimer. Part of the ribosomal stalk of the 50S ribosomal subunit. Forms a multimeric L10(L12)X complex, where L10 forms an elongated spine to which 2 to 4 L12 dimers bind in a sequential fashion. Binds GTP-bound translation factors.

Functionally, forms part of the ribosomal stalk which helps the ribosome interact with GTP-bound translation factors. Is thus essential for accurate translation. The polypeptide is Large ribosomal subunit protein bL12 (Haemophilus ducreyi (strain 35000HP / ATCC 700724)).